Reading from the N-terminus, the 70-residue chain is Large ribosomal subunit protein bL31 (70 aa).

Residues Cys-16, Cys-18, Cys-37, and Cys-40 each coordinate Zn(2+).

The protein belongs to the bacterial ribosomal protein bL31 family. Type A subfamily. In terms of assembly, part of the 50S ribosomal subunit. Zn(2+) serves as cofactor.

Functionally, binds the 23S rRNA. In Shewanella halifaxensis (strain HAW-EB4), this protein is Large ribosomal subunit protein bL31.